Consider the following 264-residue polypeptide: Tritrans,polycis-undecaprenyl-diphosphate synthase (geranylgeranyl-diphosphate specific) (264 aa).

D43 is a catalytic residue. Mg(2+) is bound at residue D43. Residues 44–47 (GNRR), W48, H60, and 88–90 (STE) contribute to the substrate site. N91 serves as the catalytic Proton acceptor. Residues F92, R94, R213, and 219 to 221 (RIS) each bind substrate. E232 is a Mg(2+) binding site.

The protein belongs to the UPP synthase family. As to quaternary structure, homodimer. Requires Mg(2+) as cofactor.

The catalysed reaction is geranylgeranyl diphosphate + 7 isopentenyl diphosphate = tri-trans,hepta-cis-undecaprenyl diphosphate + 7 diphosphate. Catalyzes the sequential condensation of isopentenyl diphosphate (IPP) with geranylgeranyl diphosphate (GGPP) to yield (2Z,6Z,10Z,14Z,18Z,22Z,26Z,30E,34E,38E)-undecaprenyl diphosphate (tritrans,heptacis-UPP). It is probably the precursor of glycosyl carrier lipids. The chain is Tritrans,polycis-undecaprenyl-diphosphate synthase (geranylgeranyl-diphosphate specific) from Pyrococcus furiosus (strain ATCC 43587 / DSM 3638 / JCM 8422 / Vc1).